The chain runs to 598 residues: Elongation factor 4 (598 aa).

In terms of domain architecture, tr-type G spans 2-184 (KNIRNFSIIA…EIVAKIPAPE (183 aa)). GTP-binding positions include 14–19 (DHGKST) and 131–134 (NKID).

This sequence belongs to the TRAFAC class translation factor GTPase superfamily. Classic translation factor GTPase family. LepA subfamily.

The protein resides in the cell inner membrane. The catalysed reaction is GTP + H2O = GDP + phosphate + H(+). In terms of biological role, required for accurate and efficient protein synthesis under certain stress conditions. May act as a fidelity factor of the translation reaction, by catalyzing a one-codon backward translocation of tRNAs on improperly translocated ribosomes. Back-translocation proceeds from a post-translocation (POST) complex to a pre-translocation (PRE) complex, thus giving elongation factor G a second chance to translocate the tRNAs correctly. Binds to ribosomes in a GTP-dependent manner. In Haemophilus influenzae (strain ATCC 51907 / DSM 11121 / KW20 / Rd), this protein is Elongation factor 4.